We begin with the raw amino-acid sequence, 118 residues long: MKLRANRVGEQMKKELGDIISRKIKDPRIGFVTVTDVQVSGDLQIAKVYISVLGDEEQKENTLKGLAKAKGFIRSEIGQRIRLRKTPEITFEFDESIGYGHRIDTLLHEINKDGKREE.

This sequence belongs to the RbfA family. As to quaternary structure, monomer. Binds 30S ribosomal subunits, but not 50S ribosomal subunits or 70S ribosomes.

The protein localises to the cytoplasm. Its function is as follows. One of several proteins that assist in the late maturation steps of the functional core of the 30S ribosomal subunit. Associates with free 30S ribosomal subunits (but not with 30S subunits that are part of 70S ribosomes or polysomes). Required for efficient processing of 16S rRNA. May interact with the 5'-terminal helix region of 16S rRNA. The sequence is that of Ribosome-binding factor A from Bacillus cereus (strain B4264).